The primary structure comprises 181 residues: Large ribosomal subunit protein uL6 (181 aa).

It belongs to the universal ribosomal protein uL6 family. Part of the 50S ribosomal subunit.

Its function is as follows. This protein binds to the 23S rRNA, and is important in its secondary structure. It is located near the subunit interface in the base of the L7/L12 stalk, and near the tRNA binding site of the peptidyltransferase center. The sequence is that of Large ribosomal subunit protein uL6 from Synechococcus sp. (strain JA-2-3B'a(2-13)) (Cyanobacteria bacterium Yellowstone B-Prime).